Reading from the N-terminus, the 556-residue chain is Acetyl-coenzyme A thioesterase (556 aa).

A HotDog ACOT-type 1 domain is found at 6–118; sequence APGEVLMSQA…FSTFVAKPVG (113 aa). Lys34 is modified (N6-succinyllysine). CoA-binding positions include 54–56 and 83–85; these read TAS and STS. The residue at position 97 (Lys97) is an N6-succinyllysine. CoA is bound at residue Arg145. Lys160 and Lys229 each carry N6-succinyllysine. The HotDog ACOT-type 2 domain occupies 180–295; that stretch reads MGTSVQSIEL…FLIYNAVDDQ (116 aa). 235–237 contacts CoA; the sequence is KFR. Positions 327–536 constitute an START domain; it reads GRKYVISHKK…GGWSKSIEEA (210 aa).

In terms of assembly, homodimer or homotetramer.

The protein localises to the cytoplasm. The protein resides in the cytosol. The catalysed reaction is acetyl-CoA + H2O = acetate + CoA + H(+). The enzyme catalyses butanoyl-CoA + H2O = butanoate + CoA + H(+). It catalyses the reaction hexanoyl-CoA + H2O = hexanoate + CoA + H(+). Its pathway is lipid metabolism; fatty acid metabolism. With respect to regulation, allosterically regulated by ATP (activator) and ADP (inhibitor). Cold labile, it dissociates into inactive monomers at low temperature. In terms of biological role, catalyzes the hydrolysis of acyl-CoAs into free fatty acids and coenzyme A (CoASH), regulating their respective intracellular levels. Preferentially hydrolyzes acetyl-CoA. This chain is Acetyl-coenzyme A thioesterase (Acot12), found in Mus musculus (Mouse).